Here is a 355-residue protein sequence, read N- to C-terminus: Peptide chain release factor 1 (355 aa).

Q231 carries the N5-methylglutamine modification. Positions 281 to 291 (ERLAKESEARK) are enriched in basic and acidic residues. A disordered region spans residues 281 to 302 (ERLAKESEARKSQVGSGDRSER).

Belongs to the prokaryotic/mitochondrial release factor family. Methylated by PrmC. Methylation increases the termination efficiency of RF1.

It localises to the cytoplasm. Its function is as follows. Peptide chain release factor 1 directs the termination of translation in response to the peptide chain termination codons UAG and UAA. In Campylobacter jejuni subsp. doylei (strain ATCC BAA-1458 / RM4099 / 269.97), this protein is Peptide chain release factor 1.